Reading from the N-terminus, the 273-residue chain is Undecaprenyl-diphosphatase (273 aa).

7 helical membrane passes run 54-74 (LGSI…LIGI), 90-110 (LTLI…LVFH), 116-136 (LFNP…LIAA), 156-178 (QAFM…SGAT), 190-210 (YAAS…ATVL), 222-242 (ADIP…LIAI), and 252-272 (ISFI…YVVF).

The protein belongs to the UppP family.

Its subcellular location is the cell inner membrane. The catalysed reaction is di-trans,octa-cis-undecaprenyl diphosphate + H2O = di-trans,octa-cis-undecaprenyl phosphate + phosphate + H(+). Catalyzes the dephosphorylation of undecaprenyl diphosphate (UPP). Confers resistance to bacitracin. The chain is Undecaprenyl-diphosphatase from Salmonella paratyphi A (strain ATCC 9150 / SARB42).